An 866-amino-acid polypeptide reads, in one-letter code: Paramyosin (866 aa).

The nonhelical region stretch occupies residues 1–22; sequence MMNHDTESHVKISRTIYRGVSP. The stretch at 23-839 forms a coiled coil; the sequence is STTRLESRVR…AERTVTVRRV (817 aa). Residues 840–866 form a nonhelical region region; that stretch reads GPGGRAVSVARELSVTSNRGMRATSMM.

It belongs to the paramyosin family. In terms of assembly, homodimer.

Its subcellular location is the cytoplasm. The protein localises to the myofibril. Paramyosin is a major structural component of many thick filaments isolated from invertebrate muscles. The protein is Paramyosin of Schistosoma japonicum (Blood fluke).